The following is a 154-amino-acid chain: MKAIFIILAILMVTQAFKMTSKVNTKLQSQIQSKFQSKNKLASTFQTSSQLKDSCLNDPEQRFYITGCSNNPVCGDAFDCSATGDDEEKCDAVGQNVIDLFYYFWGTCVNDYASCIMFAATTYNMYSGPENCGCINQVSYADWLDYFDCPSFSG.

The first 16 residues, 1-16 (MKAIFIILAILMVTQA), serve as a signal peptide directing secretion. Residues 17–52 (FKMTSKVNTKLQSQIQSKFQSKNKLASTFQTSSQLK) constitute a propeptide that is removed on maturation.

It localises to the secreted. Mating ciliate pheromones (or gamones) are diffusible extracellular communication signals that distinguish different intraspecific classes of cells commonly referred to as 'mating types'. They prepare the latter for conjugation by changing their cell surface properties. This Euplotoides octocarinatus (Freshwater ciliate) protein is Mating pheromone 2.